Here is a 90-residue protein sequence, read N- to C-terminus: Small ribosomal subunit protein bS18A (90 aa).

The protein belongs to the bacterial ribosomal protein bS18 family. In terms of assembly, part of the 30S ribosomal subunit. Forms a tight heterodimer with protein bS6.

Functionally, binds as a heterodimer with protein bS6 to the central domain of the 16S rRNA, where it helps stabilize the platform of the 30S subunit. The protein is Small ribosomal subunit protein bS18A of Roseiflexus castenholzii (strain DSM 13941 / HLO8).